The sequence spans 66 residues: Large ribosomal subunit protein uL29 (66 aa).

This sequence belongs to the universal ribosomal protein uL29 family.

This is Large ribosomal subunit protein uL29 from Helicobacter pylori (strain Shi470).